A 58-amino-acid chain; its full sequence is Light-harvesting protein B-875 alpha chain (58 aa).

Topologically, residues 1-15 are cytoplasmic; sequence MSKFYKIWMIFDPRR. The chain crosses the membrane as a helical span at residues 16-36; it reads VFVAQGVFLFLLAVMIHLILL. His-32 contributes to the a bacteriochlorophyll binding site. The Periplasmic segment spans residues 37 to 58; sequence STPSYNWLEISAAKYNRVAVAE.

Belongs to the antenna complex alpha subunit family. In terms of assembly, the core complex is formed by different alpha and beta chains, binding bacteriochlorophyll molecules, and arranged most probably in tetrameric structures disposed around the reaction center. The non-pigmented gamma chains may constitute additional components.

The protein resides in the cell inner membrane. In terms of biological role, antenna complexes are light-harvesting systems, which transfer the excitation energy to the reaction centers. The polypeptide is Light-harvesting protein B-875 alpha chain (pufA) (Cereibacter sphaeroides (strain ATCC 17023 / DSM 158 / JCM 6121 / CCUG 31486 / LMG 2827 / NBRC 12203 / NCIMB 8253 / ATH 2.4.1.) (Rhodobacter sphaeroides)).